The primary structure comprises 122 residues: Acidic phospholipase A2 CTs-A3 (122 aa).

7 cysteine pairs are disulfide-bonded: C26/C116, C28/C44, C43/C95, C49/C122, C50/C88, C57/C81, and C75/C86. Residues Y27, G29, and G31 each contribute to the Ca(2+) site. Residue H47 is part of the active site. D48 provides a ligand contact to Ca(2+). The active site involves D89.

It depends on Ca(2+) as a cofactor. In terms of tissue distribution, expressed by the venom gland.

Its subcellular location is the secreted. The catalysed reaction is a 1,2-diacyl-sn-glycero-3-phosphocholine + H2O = a 1-acyl-sn-glycero-3-phosphocholine + a fatty acid + H(+). In terms of biological role, snake venom phospholipase A2 (PLA2) that shows a moderate inhibition of ADP-induced human platelet aggregation when tested on platelet rich plasma. Exhibits moderate hydrolytic activities and prefers the anionic micelles (dPPC with deoxycholate) to the zwitterionic micelles (dPPC with Triton X-100). PLA2 catalyzes the calcium-dependent hydrolysis of the 2-acyl groups in 3-sn-phosphoglycerides. The sequence is that of Acidic phospholipase A2 CTs-A3 from Trimeresurus stejnegeri (Chinese green tree viper).